A 357-amino-acid polypeptide reads, in one-letter code: Protein FAM118A (357 aa).

Position 1 is an N-acetylmethionine (Met-1). The chain crosses the membrane as a helical span at residues 30 to 46 (LLLVIGTGVSAAVAPGI). A Phosphoserine modification is found at Ser-311.

Belongs to the FAM118 family.

The protein localises to the membrane. This is Protein FAM118A (Fam118a) from Mus musculus (Mouse).